A 467-amino-acid chain; its full sequence is DNA polymerase IV (467 aa).

In terms of domain architecture, UmuC spans 5–187; the sequence is VLHIDMDAFF…LPVGALWGVG (183 aa). Mg(2+) is bound by residues Asp9 and Asp104. Glu105 is an active-site residue. Disordered stretches follow at residues 364-383 and 429-449; these read PDTD…STQV and KGRT…DPLD.

The protein belongs to the DNA polymerase type-Y family. In terms of assembly, monomer. Mg(2+) is required as a cofactor.

It is found in the cytoplasm. It carries out the reaction DNA(n) + a 2'-deoxyribonucleoside 5'-triphosphate = DNA(n+1) + diphosphate. Its function is as follows. Poorly processive, error-prone DNA polymerase involved in untargeted mutagenesis. Copies undamaged DNA at stalled replication forks, which arise in vivo from mismatched or misaligned primer ends. These misaligned primers can be extended by PolIV. Exhibits no 3'-5' exonuclease (proofreading) activity. May be involved in translesional synthesis, in conjunction with the beta clamp from PolIII. The protein is DNA polymerase IV of Corynebacterium glutamicum (strain ATCC 13032 / DSM 20300 / JCM 1318 / BCRC 11384 / CCUG 27702 / LMG 3730 / NBRC 12168 / NCIMB 10025 / NRRL B-2784 / 534).